A 61-amino-acid polypeptide reads, in one-letter code: Small ribosomal subunit protein bS21 (61 aa).

The segment at 40 to 61 is disordered; it reads KPSVKRKKKSEAARKRKNKRRF. Basic residues predominate over residues 43–61; that stretch reads VKRKKKSEAARKRKNKRRF.

Belongs to the bacterial ribosomal protein bS21 family.

This is Small ribosomal subunit protein bS21 from Ligilactobacillus salivarius (strain UCC118) (Lactobacillus salivarius).